The following is a 121-amino-acid chain: Large ribosomal subunit protein bL31 (121 aa).

The large ribosomal subunit protein bL31 stretch occupies residues 1-97 (MKEGIHPDYK…AKENRAAKRA (97 aa)). Residues cysteine 16, cysteine 18, cysteine 36, and cysteine 39 each contribute to the Zn(2+) site. Residues 65–80 (ATPAKAEPAKKAPAAE) show a composition bias toward low complexity. A disordered region spans residues 65–121 (ATPAKAEPAKKAPAAEPAKKVEAAKENRAAKRAKAGKSKKSEAAPAAEAPAADAKPE). The unknown stretch occupies residues 74 to 121 (KKAPAAEPAKKVEAAKENRAAKRAKAGKSKKSEAAPAAEAPAADAKPE). Residues 81-93 (PAKKVEAAKENRA) are compositionally biased toward basic and acidic residues. Low complexity predominate over residues 107 to 121 (AAPAAEAPAADAKPE).

This sequence belongs to the bacterial ribosomal protein bL31 family. Type A subfamily. In terms of assembly, part of the 50S ribosomal subunit. Zn(2+) is required as a cofactor.

In terms of biological role, binds the 23S rRNA. This is Large ribosomal subunit protein bL31 from Anaeromyxobacter dehalogenans (strain 2CP-C).